Here is a 382-residue protein sequence, read N- to C-terminus: Flap endonuclease 1 (382 aa).

Positions 1–104 (MGIKGLSQVI…GELEKRTERR (104 aa)) are N-domain. Asp34 is a binding site for Mg(2+). DNA is bound by residues Arg47 and Arg70. The Mg(2+) site is built by Asp86, Glu158, Glu160, Asp179, and Asp181. The tract at residues 122–253 (EAEKFERRLV…KKAVELIKQH (132 aa)) is I-domain. Residue Glu158 participates in DNA binding. Gly231 and Asp233 together coordinate DNA. Mg(2+) is bound at residue Asp233. Positions 336–344 (TQGRIDSFF) are interaction with PCNA. The segment covering 359 to 368 (KAQEEAEKMK) has biased composition (basic and acidic residues). A disordered region spans residues 359-382 (KAQEEAEKMKKGGKKSGPPKKKAK). A compositionally biased stretch (basic residues) spans 369 to 382 (KGGKKSGPPKKKAK).

It belongs to the XPG/RAD2 endonuclease family. FEN1 subfamily. As to quaternary structure, interacts with PCNA. Three molecules of crn-1 bind to one PCNA trimer with each molecule binding to one PCNA monomer. PCNA stimulates the nuclease activity without altering cleavage specificity. Requires Mg(2+) as cofactor. In terms of processing, phosphorylated. Phosphorylation upon DNA damage induces relocalization to the nuclear plasma.

The protein localises to the nucleus. It is found in the nucleolus. Its subcellular location is the nucleoplasm. The protein resides in the mitochondrion. In terms of biological role, structure-specific nuclease with 5'-flap endonuclease and 5'-3' exonuclease activities involved in DNA replication and repair. During DNA replication, cleaves the 5'-overhanging flap structure that is generated by displacement synthesis when DNA polymerase encounters the 5'-end of a downstream Okazaki fragment. It enters the flap from the 5'-end and then tracks to cleave the flap base, leaving a nick for ligation. Also involved in the long patch base excision repair (LP-BER) pathway, by cleaving within the apurinic/apyrimidinic (AP) site-terminated flap. Acts as a genome stabilization factor that prevents flaps from equilibrating into structures that lead to duplications and deletions. Also possesses 5'-3' exonuclease activity on nicked or gapped double-stranded DNA, and exhibits RNase H activity. Also involved in replication and repair of rDNA and in repairing mitochondrial DNA. The protein is Flap endonuclease 1 of Caenorhabditis briggsae.